The chain runs to 338 residues: Aspartate carbamoyltransferase catalytic subunit (338 aa).

Carbamoyl phosphate is bound by residues Arg-59 and Thr-60. Lys-87 contacts L-aspartate. Carbamoyl phosphate-binding residues include Arg-109, His-142, and Gln-145. Residues Arg-182 and Arg-253 each contribute to the L-aspartate site. Residues Gly-294 and Pro-295 each contribute to the carbamoyl phosphate site.

This sequence belongs to the aspartate/ornithine carbamoyltransferase superfamily. ATCase family. As to quaternary structure, heterododecamer (2C3:3R2) of six catalytic PyrB chains organized as two trimers (C3), and six regulatory PyrI chains organized as three dimers (R2).

It catalyses the reaction carbamoyl phosphate + L-aspartate = N-carbamoyl-L-aspartate + phosphate + H(+). It functions in the pathway pyrimidine metabolism; UMP biosynthesis via de novo pathway; (S)-dihydroorotate from bicarbonate: step 2/3. In terms of biological role, catalyzes the condensation of carbamoyl phosphate and aspartate to form carbamoyl aspartate and inorganic phosphate, the committed step in the de novo pyrimidine nucleotide biosynthesis pathway. The sequence is that of Aspartate carbamoyltransferase catalytic subunit from Prochlorococcus marinus (strain AS9601).